Consider the following 169-residue polypeptide: NAD(P)H-quinone oxidoreductase subunit J, chloroplastic (169 aa).

This sequence belongs to the complex I 30 kDa subunit family. As to quaternary structure, NDH is composed of at least 16 different subunits, 5 of which are encoded in the nucleus.

The protein resides in the plastid. It is found in the chloroplast thylakoid membrane. It carries out the reaction a plastoquinone + NADH + (n+1) H(+)(in) = a plastoquinol + NAD(+) + n H(+)(out). The catalysed reaction is a plastoquinone + NADPH + (n+1) H(+)(in) = a plastoquinol + NADP(+) + n H(+)(out). In terms of biological role, NDH shuttles electrons from NAD(P)H:plastoquinone, via FMN and iron-sulfur (Fe-S) centers, to quinones in the photosynthetic chain and possibly in a chloroplast respiratory chain. The immediate electron acceptor for the enzyme in this species is believed to be plastoquinone. Couples the redox reaction to proton translocation, and thus conserves the redox energy in a proton gradient. The chain is NAD(P)H-quinone oxidoreductase subunit J, chloroplastic from Zygnema circumcarinatum (Green alga).